A 593-amino-acid polypeptide reads, in one-letter code: MVLLPSMTSLLLVFLFLYGVSPVISDGSDHRYKVGDDVPLYANKVGPFHNPSETYRYFDLPFCSSAPVKEKKEALGEVLNGDRLVSAPYKLEFLGEKNSEVACRKRLSREDVAKFRDVIAKDYYFQMYYDDLPIWGFLGKVVKEGKTDPSEYKYYLFNHLQFEIFYNKDRVIEIIVRTDQNFLVDLTEDKEVQVDFTYTVRWKETEIPFEKRMEKYSLASSMPHHLEIHWFSIINSCVTVLLLTGFLATILMRVLKNDFVKYAHDEEAVDDQEETGWKLIHGDVFRFPKHKSLLAAALGSGTQLFTLAVFIFMLALVGVFYPYNRGALFTALVVIYALTSGIAGYTAASFYCQLEGTNWVRNVILTGSLFCGPLLITFSFLNTVAIAYQATAALPFGTIVVIFLIWALVTSPLLILGGIAGKNRKSEFQAPCRTTKYPREIPPMRWYRRTLPQMAMAGFLPFSAIYIELYYIFASVWGHRIYTIYSILSIVFLILVIVTAFITVALTYFQLAAEDHEWWWRSLLCGGSTGLFIYAYCLYYYYARSDMSGFMQTSFFFGYMACICYGFFLMLGTIGFCASLLFVRHIYRSIKCE.

The N-terminal stretch at 1 to 25 (MVLLPSMTSLLLVFLFLYGVSPVIS) is a signal peptide. The Lumenal segment spans residues 26–230 (DGSDHRYKVG…SMPHHLEIHW (205 aa)). Residues 231–251 (FSIINSCVTVLLLTGFLATIL) traverse the membrane as a helical segment. The Cytoplasmic segment spans residues 252–303 (MRVLKNDFVKYAHDEEAVDDQEETGWKLIHGDVFRFPKHKSLLAAALGSGTQ). The chain crosses the membrane as a helical span at residues 304 to 324 (LFTLAVFIFMLALVGVFYPYN). The Lumenal portion of the chain corresponds to 325–326 (RG). A helical transmembrane segment spans residues 327–347 (ALFTALVVIYALTSGIAGYTA). Topologically, residues 348 to 366 (ASFYCQLEGTNWVRNVILT) are cytoplasmic. The chain crosses the membrane as a helical span at residues 367–387 (GSLFCGPLLITFSFLNTVAIA). Residues 388–398 (YQATAALPFGT) lie on the Lumenal side of the membrane. Residues 399–419 (IVVIFLIWALVTSPLLILGGI) traverse the membrane as a helical segment. Residues 420 to 453 (AGKNRKSEFQAPCRTTKYPREIPPMRWYRRTLPQ) lie on the Cytoplasmic side of the membrane. A helical transmembrane segment spans residues 454 to 474 (MAMAGFLPFSAIYIELYYIFA). The Lumenal portion of the chain corresponds to 475–486 (SVWGHRIYTIYS). A helical transmembrane segment spans residues 487–507 (ILSIVFLILVIVTAFITVALT). Residues 508–522 (YFQLAAEDHEWWWRS) lie on the Cytoplasmic side of the membrane. A helical membrane pass occupies residues 523-543 (LLCGGSTGLFIYAYCLYYYYA). Residues 544-554 (RSDMSGFMQTS) are Lumenal-facing. The chain crosses the membrane as a helical span at residues 555–575 (FFFGYMACICYGFFLMLGTIG). Over 576–593 (FCASLLFVRHIYRSIKCE) the chain is Cytoplasmic. The Endoplasmic reticulum export signal signature appears at 582-587 (FVRHIY). The Golgi retention signal motif lies at 591–593 (KCE).

It belongs to the nonaspanin (TM9SF) (TC 9.A.2) family.

It localises to the endosome membrane. The protein resides in the golgi apparatus membrane. This Arabidopsis thaliana (Mouse-ear cress) protein is Transmembrane 9 superfamily member 4.